The sequence spans 355 residues: NAD-dependent protein deacylase sirtuin-6 (355 aa).

Residue S2 is modified to N-acetylserine. A Phosphoserine modification is found at S10. The region spanning 27–272 is the Deacetylase sirtuin-type domain; that stretch reads PEELERKVWE…TRLMKHLGLE (246 aa). An N6-acetyllysine modification is found at K33. NAD(+)-binding residues include A53, T57, F64, R65, W71, Q113, and H133. Residue H133 is the Proton acceptor of the active site. Zn(2+) is bound by residues C141, C144, and C166. Residue K170 forms a Glycyl lysine isopeptide (Lys-Gly) (interchain with G-Cter in ubiquitin) linkage. C177 is a Zn(2+) binding site. Residues G214, S216, N240, Q242, and V258 each contribute to the NAD(+) site. Residues 284–355 form a disordered region; the sequence is RALPPLPRPP…KRVKAEAVPS (72 aa). Residues 287–296 are compositionally biased toward pro residues; the sequence is PPLPRPPTPK. T294 is subject to Phosphothreonine. 2 positions are modified to phosphoserine: S303 and S330.

The protein belongs to the sirtuin family. Class IV subfamily. In terms of assembly, homodimer; binds to nucleosomes and DNA ends as a homodimer. Interacts with RELA; interferes with RELA binding to target DNA. Interacts with SMARCA5; promoting recruitment of SMARCA5/SNF2H to double-strand breaks (DSBs) sites. Interacts with the mTORC2 complex; preventing the ability of SIRT6 to deacetylate FOXO1. Interacts with the CLOCK-BMAL1 complex; recruited by the CLOCK-BMAL1 complex to regulate expression of clock-controlled genes. Interacts with CSNK2A2; preventing CSNK2A2 localization to the nucleus. Acetylated at Lys-33. Deacetylation at Lys-33 by SIRT1 promotes homomultimerization and binding to double-strand breaks (DSBs) sites. Post-translationally, phosphorylation at Ser-10 by MAPK8/JNK1 in response to oxidative stress stimulates the mono-ADP-ribosyltransferase activity on PARP1, leading to PARP1 recruitment to double-strand breaks (DSBs). In terms of processing, monoubiquitinated at Lys-170 by STUB1/CHIP, preventing its degradation by the proteasome. Sumoylated, leading to specifically decrease ability to deacetylate histone H3 at 'Lys-56' (H3K56ac).

The protein localises to the nucleus. It localises to the chromosome. The protein resides in the telomere. Its subcellular location is the endoplasmic reticulum. It carries out the reaction N(6)-acetyl-L-lysyl-[protein] + NAD(+) + H2O = 2''-O-acetyl-ADP-D-ribose + nicotinamide + L-lysyl-[protein]. It catalyses the reaction N(6)-tetradecanoyl-L-lysyl-[protein] + NAD(+) + H2O = 2''-O-tetradecanoyl-ADP-D-ribose + nicotinamide + L-lysyl-[protein]. The catalysed reaction is N(6)-hexadecanoyl-L-lysyl-[protein] + NAD(+) + H2O = 2''-O-hexadecanoyl-ADP-D-ribose + nicotinamide + L-lysyl-[protein]. The enzyme catalyses L-lysyl-[protein] + NAD(+) = N(6)-(ADP-D-ribosyl)-L-lysyl-[protein] + nicotinamide + H(+). It carries out the reaction L-arginyl-[protein] + NAD(+) = N(omega)-(ADP-D-ribosyl)-L-arginyl-[protein] + nicotinamide + H(+). Its activity is regulated as follows. Compared to the defatty-acylase activity, the protein deacetylase activity is weak in vitro, and requires activation. The histone deacetylase activity is strongly activated upon binding to nucleosomes and chromatin in vivo. Two molecules of SIRT6 associate with the acidic patch of one nucleosome, while the C-terminal disordered region of SIRT6 associates with nucleosomal DNA, leading to efficient histone deacetylation. The protein-lysine deacetylase activity is also activated by long-chain free fatty-acids. Functionally, NAD-dependent protein deacetylase, deacylase and mono-ADP-ribosyltransferase that plays an essential role in DNA damage repair, telomere maintenance, metabolic homeostasis, inflammation, tumorigenesis and aging. Displays protein-lysine deacetylase or defatty-acylase (demyristoylase and depalmitoylase) activity, depending on the context. Acts as a key histone deacetylase by catalyzing deacetylation of histone H3 at 'Lys-9', 'Lys-18' and 'Lys-56' (H3K9ac, H3K18ac and H3K56ac, respectively), suppressing target gene expression of several transcription factors, including NF-kappa-B. Acts as an inhibitor of transcription elongation by mediating deacetylation of H3K9ac and H3K56ac, preventing release of NELFE from chromatin and causing transcriptional pausing. Involved in DNA repair by promoting double-strand break (DSB) repair: acts as a DSB sensor by recognizing and binding DSB sites, leading to (1) recruitment of DNA repair proteins, such as SMARCA5/SNF2H, and (2) deacetylation of histone H3K9ac and H3K56ac. SIRT6 participation to DSB repair is probably involved in extension of life span. Also promotes DNA repair by deacetylating non-histone proteins, such as DDB2 and p53/TP53. Specifically deacetylates H3K18ac at pericentric heterochromatin, thereby maintaining pericentric heterochromatin silencing at centromeres and protecting against genomic instability and cellular senescence. Involved in telomere maintenance by catalyzing deacetylation of histone H3 in telomeric chromatin, regulating telomere position effect and telomere movement in response to DNA damage. Required for embryonic stem cell differentiation by mediating histone deacetylation of H3K9ac. Plays a major role in metabolism by regulating processes such as glycolysis, gluconeogenesis, insulin secretion and lipid metabolism. Inhibits glycolysis via histone deacetylase activity and by acting as a corepressor of the transcription factor HIF1A, thereby controlling the expression of multiple glycolytic genes. Has tumor suppressor activity by repressing glycolysis, thereby inhibiting the Warburg effect. Also regulates glycolysis and tumorigenesis by mediating deacetylation and nuclear export of non-histone proteins, such as isoform M2 of PKM (PKM2). Acts as a negative regulator of gluconeogenesis by mediating deacetylation of non-histone proteins, such as FOXO1 and KAT2A/GCN5. Promotes beta-oxidation of fatty acids during fasting by catalyzing deacetylation of NCOA2, inducing coactivation of PPARA. Acts as a regulator of lipid catabolism in brown adipocytes, both by catalyzing deacetylation of histones and non-histone proteins, such as FOXO1. Also acts as a regulator of circadian rhythms, both by regulating expression of clock-controlled genes involved in lipid and carbohydrate metabolism, and by catalyzing deacetylation of PER2. The defatty-acylase activity is specifically involved in regulation of protein secretion. Has high activity toward long-chain fatty acyl groups and mediates protein-lysine demyristoylation and depalmitoylation of target proteins, such as RRAS2 and TNF, thereby regulating their secretion. Also acts as a mono-ADP-ribosyltransferase by mediating mono-ADP-ribosylation of PARP1, TRIM28/KAP1 or SMARCC2/BAF170. Mono-ADP-ribosyltransferase activity is involved in DNA repair, cellular senescence, repression of LINE-1 retrotransposon elements and regulation of transcription. The protein is NAD-dependent protein deacylase sirtuin-6 of Macaca fascicularis (Crab-eating macaque).